The chain runs to 97 residues: YcgL domain-containing protein PA1295 (97 aa).

Positions 3 to 87 (RICSVYKSPR…GEEEYIEHLP (85 aa)) constitute a YcgL domain.

In Pseudomonas aeruginosa (strain ATCC 15692 / DSM 22644 / CIP 104116 / JCM 14847 / LMG 12228 / 1C / PRS 101 / PAO1), this protein is YcgL domain-containing protein PA1295.